The chain runs to 102 residues: NADH-quinone oxidoreductase subunit K (102 aa).

3 helical membrane-spanning segments follow: residues 6-26, 30-50, and 62-82; these read LEHG…GVMV, LLFM…AFVL, and IMFI…LAIV.

It belongs to the complex I subunit 4L family. In terms of assembly, NDH-1 is composed of 14 different subunits. Subunits NuoA, H, J, K, L, M, N constitute the membrane sector of the complex.

It localises to the cell inner membrane. It carries out the reaction a quinone + NADH + 5 H(+)(in) = a quinol + NAD(+) + 4 H(+)(out). NDH-1 shuttles electrons from NADH, via FMN and iron-sulfur (Fe-S) centers, to quinones in the respiratory chain. The immediate electron acceptor for the enzyme in this species is believed to be ubiquinone. Couples the redox reaction to proton translocation (for every two electrons transferred, four hydrogen ions are translocated across the cytoplasmic membrane), and thus conserves the redox energy in a proton gradient. This Acinetobacter baylyi (strain ATCC 33305 / BD413 / ADP1) protein is NADH-quinone oxidoreductase subunit K.